The primary structure comprises 2388 residues: Highly reducing polyketide synthase Preu1 (2388 aa).

Residues 7–432 (NDDIAIVGLA…GTNAHVILDD (426 aa)) enclose the Ketosynthase family 3 (KS3) domain. Active-site for beta-ketoacyl synthase activity residues include cysteine 180, histidine 315, and histidine 355. Positions 549 to 875 (GFVFTGQGAQ…SSVLMRGEDG (327 aa)) are malonyl-CoA:ACP transacylase (MAT) domain. The active-site For malonyltransferase activity is serine 641. Positions 940 to 1074 (HDLLGAPTQD…GLGKIHYRPE (135 aa)) are N-terminal hotdog fold. Residues 940–1256 (HDLLGAPTQD…CRELPNGNSQ (317 aa)) form the PKS/mFAS DH domain. A dehydratase (DH) domain region spans residues 941–1251 (DLLGAPTQDS…VEGLRCRELP (311 aa)). Histidine 972 (proton acceptor; for dehydratase activity) is an active-site residue. The tract at residues 1102 to 1256 (TASISPVDFY…CRELPNGNSQ (155 aa)) is C-terminal hotdog fold. Aspartate 1167 acts as the Proton donor; for dehydratase activity in catalysis. Positions 1676 to 1983 (KLPSDARFTS…VPTGLGKAVL (308 aa)) are enoyl reductase (ER) domain. The segment at 2007–2191 (ATYVLAGGLG…AATSVDLGLM (185 aa)) is ketoreductase (KR) domain. The region spanning 2303 to 2380 (QANGIVLEAL…ALAEKISKAS (78 aa)) is the Carrier domain. Serine 2340 is subject to O-(pantetheine 4'-phosphoryl)serine.

It depends on pantetheine 4'-phosphate as a cofactor.

In terms of biological role, highly reducing polyketide synthase; part of a gene cluster that mediates the biosynthesis of a yet unidentified natural product. This is Highly reducing polyketide synthase Preu1 from Preussia isomera (Coprophilous fungus).